The primary structure comprises 614 residues: 1-deoxy-D-xylulose-5-phosphate synthase (614 aa).

Residues His74 and 115 to 117 (AHS) each bind thiamine diphosphate. Asp146 serves as a coordination point for Mg(2+). Thiamine diphosphate-binding positions include 147-148 (GA), Asn175, Tyr282, and Glu363. Residue Asn175 coordinates Mg(2+).

The protein belongs to the transketolase family. DXPS subfamily. As to quaternary structure, homodimer. The cofactor is Mg(2+). Thiamine diphosphate is required as a cofactor.

It catalyses the reaction D-glyceraldehyde 3-phosphate + pyruvate + H(+) = 1-deoxy-D-xylulose 5-phosphate + CO2. Its pathway is metabolic intermediate biosynthesis; 1-deoxy-D-xylulose 5-phosphate biosynthesis; 1-deoxy-D-xylulose 5-phosphate from D-glyceraldehyde 3-phosphate and pyruvate: step 1/1. Catalyzes the acyloin condensation reaction between C atoms 2 and 3 of pyruvate and glyceraldehyde 3-phosphate to yield 1-deoxy-D-xylulose-5-phosphate (DXP). The sequence is that of 1-deoxy-D-xylulose-5-phosphate synthase from Nitrosomonas europaea (strain ATCC 19718 / CIP 103999 / KCTC 2705 / NBRC 14298).